The following is a 300-amino-acid chain: Ribosomal protein bS6--L-glutamate ligase (300 aa).

Residues Met104 to Glu287 enclose the ATP-grasp domain. Residues Lys141, Glu178–Tyr179, Asp187, and Arg211–Asn213 contribute to the ATP site. Positions 248, 260, and 262 each coordinate Mg(2+). Asp248, Glu260, and Asn262 together coordinate Mn(2+).

The protein belongs to the RimK family. It depends on Mg(2+) as a cofactor. Mn(2+) serves as cofactor.

Its function is as follows. An L-glutamate ligase that catalyzes the ATP-dependent post-translational addition of glutamate residues to the C-terminus of ribosomal protein bS6 (RpsF). Is also able to catalyze the synthesis of poly-alpha-glutamate in vitro, via ATP hydrolysis from unprotected glutamate as substrate. The number of glutamate residues added to either RpsF or to poly-alpha-glutamate changes with pH. This chain is Ribosomal protein bS6--L-glutamate ligase, found in Escherichia fergusonii (strain ATCC 35469 / DSM 13698 / CCUG 18766 / IAM 14443 / JCM 21226 / LMG 7866 / NBRC 102419 / NCTC 12128 / CDC 0568-73).